A 159-amino-acid polypeptide reads, in one-letter code: Probable cyclic pyranopterin monophosphate synthase accessory protein (159 aa).

Asp128 is an active-site residue.

Belongs to the MoaC family.

It participates in cofactor biosynthesis; molybdopterin biosynthesis. Together with MoaA, is involved in the conversion of 5'-GTP to cyclic pyranopterin monophosphate (cPMP or molybdopterin precursor Z). In Methanothermobacter thermautotrophicus (strain ATCC 29096 / DSM 1053 / JCM 10044 / NBRC 100330 / Delta H) (Methanobacterium thermoautotrophicum), this protein is Probable cyclic pyranopterin monophosphate synthase accessory protein.